The chain runs to 284 residues: 2-dehydro-3-deoxyphosphooctonate aldolase (284 aa).

It belongs to the KdsA family.

It localises to the cytoplasm. It carries out the reaction D-arabinose 5-phosphate + phosphoenolpyruvate + H2O = 3-deoxy-alpha-D-manno-2-octulosonate-8-phosphate + phosphate. It functions in the pathway carbohydrate biosynthesis; 3-deoxy-D-manno-octulosonate biosynthesis; 3-deoxy-D-manno-octulosonate from D-ribulose 5-phosphate: step 2/3. It participates in bacterial outer membrane biogenesis; lipopolysaccharide biosynthesis. This chain is 2-dehydro-3-deoxyphosphooctonate aldolase, found in Erwinia tasmaniensis (strain DSM 17950 / CFBP 7177 / CIP 109463 / NCPPB 4357 / Et1/99).